The primary structure comprises 150 residues: Siroheme decarboxylase NirD subunit (150 aa).

It belongs to the Ahb/Nir family. Probably forms a complex composed of NirD, NirL, NirG and NirH. All proteins are required for the total conversion of siroheme to didecarboxysiroheme.

The enzyme catalyses siroheme + 2 H(+) = 12,18-didecarboxysiroheme + 2 CO2. Its pathway is porphyrin-containing compound metabolism. In terms of biological role, involved in heme d1 biosynthesis. Catalyzes the decarboxylation of siroheme into didecarboxysiroheme. The polypeptide is Siroheme decarboxylase NirD subunit (Pseudomonas aeruginosa (strain ATCC 15692 / DSM 22644 / CIP 104116 / JCM 14847 / LMG 12228 / 1C / PRS 101 / PAO1)).